Here is a 129-residue protein sequence, read N- to C-terminus: Small ribosomal subunit protein uS11 (129 aa).

This sequence belongs to the universal ribosomal protein uS11 family. Part of the 30S ribosomal subunit. Interacts with proteins S7 and S18. Binds to IF-3.

Its function is as follows. Located on the platform of the 30S subunit, it bridges several disparate RNA helices of the 16S rRNA. Forms part of the Shine-Dalgarno cleft in the 70S ribosome. The chain is Small ribosomal subunit protein uS11 from Bradyrhizobium diazoefficiens (strain JCM 10833 / BCRC 13528 / IAM 13628 / NBRC 14792 / USDA 110).